The sequence spans 169 residues: Small ribosomal subunit protein uS5 (169 aa).

The region spanning 14–77 (LDDQVVAINR…AAAEKNLITV (64 aa)) is the S5 DRBM domain.

This sequence belongs to the universal ribosomal protein uS5 family. As to quaternary structure, part of the 30S ribosomal subunit. Contacts proteins S4 and S8.

In terms of biological role, with S4 and S12 plays an important role in translational accuracy. Its function is as follows. Located at the back of the 30S subunit body where it stabilizes the conformation of the head with respect to the body. In Limosilactobacillus reuteri (strain DSM 20016) (Lactobacillus reuteri), this protein is Small ribosomal subunit protein uS5.